Consider the following 378-residue polypeptide: 3,6-diketocamphane 1,6-monooxygenase (378 aa).

FMN-binding positions include His-10, Ser-44, Met-76, and 201–209; that span reads TGFSYNSPS.

The protein belongs to the bacterial luciferase oxidoreductase family. Homodimer. Likely forms a loose transient complex with a P.putida flavin reductase that provides the required FMNH(2) to the enzyme.

The catalysed reaction is (1S,4S)-bornane-2,5-dione + FMNH2 + O2 = (1S,4S)-5-oxo-1,2-campholide + FMN + H2O + H(+). Its function is as follows. Involved in the degradation and assimilation of (-)-camphor, which allows P.putida strain NCIMB 10007 to grow on this enantiomer of camphor as the sole carbon source. Catalyzes the FMNH(2)-dependent lactonization of 3,6-diketocamphane via a Baeyer-Villiger oxidation to produce the unstable lactone 5-oxo-1,2-campholide with (S,S) configuration, that presumably undergoes spontaneous hydrolysis to form 2-oxo-Delta(3)-4,5,5-trimethylcyclopentenylacetate. Is also able to convert (-)-camphor to the corresponding lactone in vitro. Shows no conversion of (+)-camphor, (+)-fenchone, (-)-fenchone, and (+)-nopinone. Acts on other bicyclic ketones but very poorly on a few 2- and 4-substituted monocyclic ketones. The sequence is that of 3,6-diketocamphane 1,6-monooxygenase from Pseudomonas putida (Arthrobacter siderocapsulatus).